Reading from the N-terminus, the 616-residue chain is Methionine--tRNA ligase, chloroplastic/mitochondrial (616 aa).

Residues 78–88 carry the 'HIGH' region motif; the sequence is YYVNAPPHMGS. Positions 366–370 match the 'KMSKS' region motif; it reads KMGKS. Lysine 369 is a binding site for ATP. The span at 582–593 shows a compositional bias: basic and acidic residues; sequence LNPEKEEDEKKP. Positions 582 to 602 are disordered; it reads LNPEKEEDEKKPKVGKKTGKA.

This sequence belongs to the class-I aminoacyl-tRNA synthetase family.

The protein resides in the plastid. It is found in the chloroplast. Its subcellular location is the mitochondrion. It carries out the reaction tRNA(Met) + L-methionine + ATP = L-methionyl-tRNA(Met) + AMP + diphosphate. This is Methionine--tRNA ligase, chloroplastic/mitochondrial from Arabidopsis thaliana (Mouse-ear cress).